We begin with the raw amino-acid sequence, 185 residues long: Elongation factor P (185 aa).

Belongs to the elongation factor P family.

The protein localises to the cytoplasm. The protein operates within protein biosynthesis; polypeptide chain elongation. Its function is as follows. Involved in peptide bond synthesis. Stimulates efficient translation and peptide-bond synthesis on native or reconstituted 70S ribosomes in vitro. Probably functions indirectly by altering the affinity of the ribosome for aminoacyl-tRNA, thus increasing their reactivity as acceptors for peptidyl transferase. The sequence is that of Elongation factor P from Nitratidesulfovibrio vulgaris (strain DSM 19637 / Miyazaki F) (Desulfovibrio vulgaris).